A 703-amino-acid polypeptide reads, in one-letter code: Elongation factor G 1 (703 aa).

Residues Glu8 to Val290 enclose the tr-type G domain. GTP is bound by residues Ala17–Thr24, Asp88–His92, and Asn142–Asp145.

Belongs to the TRAFAC class translation factor GTPase superfamily. Classic translation factor GTPase family. EF-G/EF-2 subfamily.

The protein localises to the cytoplasm. In terms of biological role, catalyzes the GTP-dependent ribosomal translocation step during translation elongation. During this step, the ribosome changes from the pre-translocational (PRE) to the post-translocational (POST) state as the newly formed A-site-bound peptidyl-tRNA and P-site-bound deacylated tRNA move to the P and E sites, respectively. Catalyzes the coordinated movement of the two tRNA molecules, the mRNA and conformational changes in the ribosome. The chain is Elongation factor G 1 from Ralstonia nicotianae (strain ATCC BAA-1114 / GMI1000) (Ralstonia solanacearum).